A 124-amino-acid chain; its full sequence is Small ribosomal subunit protein uS12cz/uS12cy (124 aa).

The protein belongs to the universal ribosomal protein uS12 family. In terms of assembly, part of the 30S ribosomal subunit.

The protein resides in the plastid. The protein localises to the chloroplast. Functionally, with S4 and S5 plays an important role in translational accuracy. Located at the interface of the 30S and 50S subunits. This Agrostis stolonifera (Creeping bentgrass) protein is Small ribosomal subunit protein uS12cz/uS12cy (rps12-A).